Reading from the N-terminus, the 542-residue chain is MAAAVGGLTTCFARPTPEFIAPSTSYSAPVRVFFKPFKVRDLCCAGEVVGVLSARSIPISPRFELIRLVRMQPGLSALELLKTSSVNRYTKERISIVVIGLNVHTAPVELREKLAIPEAQWPPGIGELCALNHIEEAAVLSTCNRIEIYVVALSQHRGVKEVTEWMSKRSGIPISELCKHRVLLYNTDATQHLFEVSAGLDSLVLGEGQILAQVKHVVKTGQGVAGFDRKISGLFKHAITVGKRVRTETNISSGSFSVSSAAVELAQKKLPESSYATAKVMVVGAGKMGKLVIKHLVAKGCRKMVVVNRTQDSVDAVEELKDVEIIYKPLSKILACASEADVIFTCTASKTPLFTKEHVAMLPPAGTETGRRLFVDISVPRNVEQRVSDLETVSVFNVDDLKEVVAANKEDRLKKVQEAQSIIGEEINKFEAWRDSLETVPTIKKFRAYVERIRAAELDKCLSKMGEDIPKKKKVAINDLSLGIANKLLHGPIQHLRCDGNDSRTLDEILQNMHAINRMFDLETDLSVLEEKIRAKVERGQK.

Residues 142–145 (TCNR), S202, 207–209 (EGQ), and Q213 each bind substrate. Catalysis depends on C143, which acts as the Nucleophile. Position 284–289 (284–289 (GAGKMG)) interacts with NADP(+).

It belongs to the glutamyl-tRNA reductase family. Found in all tissues examined.

It localises to the plastid. The protein resides in the chloroplast. The catalysed reaction is (S)-4-amino-5-oxopentanoate + tRNA(Glu) + NADP(+) = L-glutamyl-tRNA(Glu) + NADPH + H(+). The protein operates within porphyrin-containing compound metabolism; protoporphyrin-IX biosynthesis; 5-aminolevulinate from L-glutamyl-tRNA(Glu): step 1/2. Catalyzes the NADPH-dependent reduction of glutamyl-tRNA(Glu) to glutamate 1-semialdehyde (GSA). The protein is Glutamyl-tRNA reductase 2, chloroplastic (HEMA2) of Cucumis sativus (Cucumber).